Here is a 358-residue protein sequence, read N- to C-terminus: GDSL esterase/lipase EXL5 (358 aa).

The first 21 residues, 1–21 (MFRKKMLVLALFSIYFLSIEA), serve as a signal peptide directing secretion. The N-linked (GlcNAc...) asparagine glycan is linked to asparagine 24. The active-site Nucleophile is the serine 36. Residues aspartate 333 and histidine 336 contribute to the active site.

It belongs to the 'GDSL' lipolytic enzyme family. In terms of tissue distribution, flower buds.

It localises to the secreted. The sequence is that of GDSL esterase/lipase EXL5 (EXL5) from Arabidopsis thaliana (Mouse-ear cress).